The primary structure comprises 161 residues: 18.1 kDa class I heat shock protein (161 aa).

The sHSP domain maps to 45-160 (DVAAFTNARV…QVKSIDISGA (116 aa)).

It belongs to the small heat shock protein (HSP20) family. In terms of assembly, may form oligomeric structures. Binds to AKR2A.

It is found in the cytoplasm. The chain is 18.1 kDa class I heat shock protein (HSP18.1) from Arabidopsis thaliana (Mouse-ear cress).